The sequence spans 355 residues: Guanine nucleotide-binding protein G(i) subunit alpha-2 (355 aa).

A lipid anchor (N-myristoyl glycine) is attached at Gly-2. Cys-3 carries S-palmitoyl cysteine lipidation. Positions 32–355 constitute a G-alpha domain; that stretch reads REVKLLLLGA…KNNLKDCGLF (324 aa). A G1 motif region spans residues 35–48; it reads KLLLLGAGESGKST. Residues 40 to 47, 176 to 182, 201 to 205, 270 to 273, and Ala-327 each bind GTP; these read GAGESGKS, LRTRVKT, DVGGQ, and NKKD. Mg(2+) is bound by residues Ser-47 and Thr-182. Residues 174–182 form a G2 motif region; the sequence is DVLRTRVKT. The G3 motif stretch occupies residues 197 to 206; sequence FKMFDVGGQR. Residues 266 to 273 are G4 motif; the sequence is ILFLNKKD. The interval 325 to 330 is G5 motif; the sequence is TCATDT.

The protein belongs to the G-alpha family. G(i/o/t/z) subfamily. In terms of assembly, g proteins are composed of 3 units; alpha, beta and gamma. The alpha chain contains the guanine nucleotide binding site. In this context, interacts with GNB2. Interacts with UNC5B. Interacts with GPSM1. Interacts with RGS12 and RGS14. Interacts (inactive GDP-bound form) with NUCB1 (via GBA motif); the interaction leads to activation of GNAI3. Interacts (inactive GDP-bound form) with CCDC88C/DAPLE (via GBA motif). Interacts (inactive GDP-bound form) with CCDC8A/GIV (via GBA motif).

It is found in the cytoplasm. The protein resides in the cell membrane. Its subcellular location is the cytoskeleton. The protein localises to the microtubule organizing center. It localises to the centrosome. It is found in the membrane. Functionally, guanine nucleotide-binding proteins (G proteins) are involved as modulators or transducers in various transmembrane signaling systems. The G(i) proteins are involved in hormonal regulation of adenylate cyclase: they inhibit the cyclase in response to beta-adrenergic stimuli. May play a role in cell division. This is Guanine nucleotide-binding protein G(i) subunit alpha-2 (Gnai2) from Rattus norvegicus (Rat).